Here is a 51-residue protein sequence, read N- to C-terminus: Large ribosomal subunit protein bL33 (51 aa).

This sequence belongs to the bacterial ribosomal protein bL33 family.

The protein is Large ribosomal subunit protein bL33 of Francisella tularensis subsp. tularensis (strain FSC 198).